A 492-amino-acid polypeptide reads, in one-letter code: Catalase isozyme 1 (492 aa).

Catalysis depends on residues histidine 65 and asparagine 138. Tyrosine 348 lines the heme pocket.

The protein belongs to the catalase family. Homotetramer. Heme serves as cofactor.

Its subcellular location is the peroxisome. The enzyme catalyses 2 H2O2 = O2 + 2 H2O. In terms of biological role, occurs in almost all aerobically respiring organisms and serves to protect cells from the toxic effects of hydrogen peroxide. The protein is Catalase isozyme 1 (CAT1) of Gossypium hirsutum (Upland cotton).